Reading from the N-terminus, the 224-residue chain is E3 ubiquitin-protein ligase TRIM48 (224 aa).

Residues 31 to 72 (CPICMNYFIDPVTIDCGHSFCRPCFYLNWQDIPILTQCFECI) form an RING-type zinc finger. The B box-type zinc finger occupies 104 to 145 (SEEQMCGIHRETKKMFCEVDRSLLCLLCSSSQEHRYHRHCPA). The Zn(2+) site is built by cysteine 109, histidine 112, cysteine 131, and histidine 137.

It belongs to the TRIM/RBCC family. Interacts with PRMT1; the interaction leads to ubiquitination of PRMT1 by TRIM48. Interacts with MAP3K5. Interacts with STRAP.

The protein resides in the cytoplasm. It localises to the cytosol. The catalysed reaction is S-ubiquitinyl-[E2 ubiquitin-conjugating enzyme]-L-cysteine + [acceptor protein]-L-lysine = [E2 ubiquitin-conjugating enzyme]-L-cysteine + N(6)-ubiquitinyl-[acceptor protein]-L-lysine.. Its function is as follows. E3 ubiquitin-protein ligase which promotes K48-linked polyubiquitination of protein methyltransferase PRMT1, leading to PRMT1 degradation. This suppresses methylation of the PRMT1 substrate MAP3K5/ASK1, promoting its activation and increasing MAP3K5-dependent cell death induced by oxidative stress. TRIM48-mediated ubiquitination of PRMT1 also suppresses methylation of FOXO1 by PRMT1, leading to inhibition of FOXO1 transcriptional activity. In Homo sapiens (Human), this protein is E3 ubiquitin-protein ligase TRIM48.